Reading from the N-terminus, the 541-residue chain is DNA polymerase epsilon subunit B (541 aa).

The protein belongs to the DNA polymerase epsilon subunit B family. Heterotetramer. Consists of four subunits: POL2, DPB2, DPB3 and DPB4.

It is found in the nucleus. In terms of biological role, as accessory component of the DNA polymerase epsilon (DNA polymerase II) participates in chromosomal DNA replication. The chain is DNA polymerase epsilon subunit B (DPB2) from Cryptococcus neoformans var. neoformans serotype D (strain B-3501A) (Filobasidiella neoformans).